Here is a 105-residue protein sequence, read N- to C-terminus: Small cysteine and glycine repeat-containing protein 4 (105 aa).

The 14 X 2 AA repeats of CG stretch occupies residues Cys4–Gly87.

It belongs to the KRTAP type 28 family.

In the hair cortex, hair keratin intermediate filaments are embedded in an interfilamentous matrix, consisting of hair keratin-associated proteins (KRTAP), which are essential for the formation of a rigid and resistant hair shaft through their extensive disulfide bond cross-linking with abundant cysteine residues of hair keratins. The matrix proteins include the high-sulfur and high-glycine-tyrosine keratins. The chain is Small cysteine and glycine repeat-containing protein 4 from Homo sapiens (Human).